Here is a 505-residue protein sequence, read N- to C-terminus: Alpha-1-syntrophin (505 aa).

Disordered regions lie at residues Met1–Gly24 and Leu40–Pro75. PH domains are found at residues Arg6–Asn269 and Asp293–His401. Residues Arg9–Gly18 show a composition bias toward low complexity. A PDZ domain is found at Arg87–Lys170. Phosphoserine is present on residues Ser101, Ser184, Ser189, Ser193, and Ser200. The tract at residues Thr183–Ala212 is disordered. Residues Leu195–Leu209 are compositionally biased toward polar residues. Residues Pro449–Ala505 enclose the SU domain. Residues Pro483 to Ala505 are calmodulin-binding.

The protein belongs to the syntrophin family. Monomer and homodimer. Interacts with the dystrophin related protein DTNA; SGCG of the dystrophin glycoprotein complex; NOS1; GRB2; GA; TGFA; MAPK12 and the sodium channel proteins SCN4A and SCN5A. Interacts with the dystrophin protein DMD in a calmodulin dependent manner and with related protein UTRN; SGCA of the dystrophin glycoprotein complex; F-actin; calmodulin and with the other members of the syntrophin family SNTB1 and SNTB2. Interacts with MYOC; regulates muscle hypertrophy. Interacts with DTNB. Post-translationally, phosphorylated by CaM-kinase II. Phosphorylation may inhibit the interaction with DMD. As to expression, highly expressed in skeletal and cardiac muscle and is also detected in brain.

Its subcellular location is the cell membrane. It localises to the sarcolemma. The protein localises to the cell junction. It is found in the cytoplasm. The protein resides in the cytoskeleton. Its function is as follows. Adapter protein that binds to and probably organizes the subcellular localization of a variety of membrane proteins. May link various receptors to the actin cytoskeleton and the extracellular matrix via dystrophin glycoprotein complex. Plays an important role in synapse formation and in the organization of UTRN and acetylcholine receptors at the neuromuscular synapse. Binds to phosphatidylinositol 4,5-bisphosphate. The polypeptide is Alpha-1-syntrophin (SNTA1) (Oryctolagus cuniculus (Rabbit)).